The following is a 379-amino-acid chain: Lipoyl synthase 1, mitochondrial (379 aa).

Residues Cys106, Cys111, Cys117, Cys137, Cys141, Cys144, and Ser352 each contribute to the [4Fe-4S] cluster site. A Radical SAM core domain is found at 122 to 341 (EHGTQTATIM…EERGNELGFL (220 aa)).

It belongs to the radical SAM superfamily. Lipoyl synthase family. [4Fe-4S] cluster serves as cofactor.

It localises to the mitochondrion. It carries out the reaction [[Fe-S] cluster scaffold protein carrying a second [4Fe-4S](2+) cluster] + N(6)-octanoyl-L-lysyl-[protein] + 2 oxidized [2Fe-2S]-[ferredoxin] + 2 S-adenosyl-L-methionine + 4 H(+) = [[Fe-S] cluster scaffold protein] + N(6)-[(R)-dihydrolipoyl]-L-lysyl-[protein] + 4 Fe(3+) + 2 hydrogen sulfide + 2 5'-deoxyadenosine + 2 L-methionine + 2 reduced [2Fe-2S]-[ferredoxin]. It participates in protein modification; protein lipoylation via endogenous pathway; protein N(6)-(lipoyl)lysine from octanoyl-[acyl-carrier-protein]: step 2/2. Its function is as follows. Catalyzes the radical-mediated insertion of two sulfur atoms into the C-6 and C-8 positions of the octanoyl moiety bound to the lipoyl domains of lipoate-dependent enzymes, thereby converting the octanoylated domains into lipoylated derivatives. The sequence is that of Lipoyl synthase 1, mitochondrial from Drosophila yakuba (Fruit fly).